Consider the following 147-residue polypeptide: uncharacterized protein (147 aa).

The HTH LytTR-type domain maps to 44-147 (LVGYIDKEIH…LKSIKERLSI (104 aa)).

The protein localises to the cytoplasm. This is an uncharacterized protein from Staphylococcus aureus (strain MW2).